The primary structure comprises 156 residues: MAAGRLRILFLLLLSLHLGLGWVLDLQEAPAADELSSGKMAETGRTWKPHQGNNNVRLPRALPGLCRLWSLTLPVAELGLGYASEEKIIFRYCAGSCPQEVRTQHSLVLARLRGQGRAHGRPCCQPTSYADVTFLDDHHHWQQLPQLSAAACGCGG.

A signal peptide spans 1–21; it reads MAAGRLRILFLLLLSLHLGLG. Intrachain disulfides connect Cys66-Cys124, Cys93-Cys152, and Cys97-Cys154.

It belongs to the TGF-beta family. GDNF subfamily. Homodimer; disulfide-linked. Interacts with GFRA4 coreceptor and RET: forms a 2:2:2 ternary complex composed of PSPN ligand, GFRA4 and RET receptor. In terms of tissue distribution, expressed at low levels in substantia nigra. Cochlea.

It is found in the secreted. In terms of biological role, growth factor that exhibits neurotrophic activity on mesencephalic dopaminergic and motor neurons. Acts by binding to its coreceptor, GFRA4, leading to autophosphorylation and activation of the RET receptor. The sequence is that of Persephin from Rattus norvegicus (Rat).